A 1165-amino-acid chain; its full sequence is Vacuolar segregation protein 7 (1165 aa).

Topologically, residues 1–919 (MTEEDRKLTV…RKSPFVKVKN (919 aa)) are cytoplasmic. The disordered stretch occupies residues 118-147 (SVSSTNNNSNNALINHNPLSSHLSNPSSSL). Serine 164 carries the post-translational modification Phosphoserine. 4 disordered regions span residues 215 to 241 (SNNT…LPSL), 274 to 423 (KAKN…SEKP), 461 to 497 (LIFP…SAPL), and 560 to 668 (EPPH…KRPL). Residues 216-230 (NNTAPSTSNNIGSNT) show a composition bias toward polar residues. Positions 334–345 (TTSTKTAPSTAP) are enriched in low complexity. Residues 346 to 367 (LGSTDNTQALTASVSSSNADNH) are compositionally biased toward polar residues. The segment covering 375–391 (SSNNNGNNSNSASNKTN) has biased composition (low complexity). The segment covering 393–412 (DIKNSNADLSASTSNNNAIN) has biased composition (polar residues). Residues 413-423 (DDSHESNSEKP) show a composition bias toward basic and acidic residues. Low complexity-rich tracts occupy residues 469-485 (QQQQ…QQQQ) and 562-571 (PHQLQQQQPP). The span at 576–587 (SVDSYTSDNPDS) shows a compositional bias: polar residues. Low complexity predominate over residues 599–613 (SLVSLSKVSPHLLSS). The span at 614 to 662 (TSSNGNTISCPNVATNSQELEPNNDISTKKSLSNSTLRHSSANRNSNYG) shows a compositional bias: polar residues. The helical; Signal-anchor for type II membrane protein transmembrane segment at 920-940 (FLYLAFVISSLLMTGFILGFL) threads the bilayer. Over 941–1165 (LATNKELQDV…KDSMVHPGKK (225 aa)) the chain is Vacuolar. Asparagine 1020 and asparagine 1099 each carry an N-linked (GlcNAc...) asparagine glycan. Positions 1074-1121 (SPGSREAKHENDDDDDDDGDDGDDENNTNERQYKSKPNARDDKEDDTK) are disordered. Over residues 1085 to 1100 (DDDDDDDGDDGDDENN) the composition is skewed to acidic residues. Residues 1111-1121 (NARDDKEDDTK) are compositionally biased toward basic and acidic residues.

As to quaternary structure, component of the PI(3,5)P2 regulatory complex, composed of ATG18, FIG4, FAB1, VAC14 and VAC7. VAC14 nucleates the assembly of the complex and serves as a scaffold. Post-translationally, N-glycosylated.

It localises to the vacuole membrane. Its function is as follows. The PI(3,5)P2 regulatory complex regulates both the synthesis and turnover of phosphatidylinositol 3,5-bisphosphate (PtdIns(3,5)P2). Positively regulates FAB1 kinase activity. Major activator of FAB1 during hyperosmotic shock and can elevate levels of PtdIns(3,5)P2 in the absence of VAC14 and FIG4. Directly involved in vacuolar membrane scission. Required for normal vacuole acidification, inheritance and morphology. This Saccharomyces cerevisiae (strain ATCC 204508 / S288c) (Baker's yeast) protein is Vacuolar segregation protein 7 (VAC7).